Here is a 113-residue protein sequence, read N- to C-terminus: Small ribosomal subunit protein uS17 (113 aa).

The protein belongs to the universal ribosomal protein uS17 family. In terms of assembly, part of the 30S ribosomal subunit.

In terms of biological role, one of the primary rRNA binding proteins, it binds specifically to the 5'-end of 16S ribosomal RNA. The polypeptide is Small ribosomal subunit protein uS17 (Sulfurisphaera tokodaii (strain DSM 16993 / JCM 10545 / NBRC 100140 / 7) (Sulfolobus tokodaii)).